Consider the following 157-residue polypeptide: Large ribosomal subunit protein bL34c (157 aa).

The N-terminal 97 residues, methionine 1–arginine 97, are a transit peptide targeting the chloroplast.

It belongs to the bacterial ribosomal protein bL34 family. As to quaternary structure, part of the 50S ribosomal subunit.

The protein localises to the plastid. The protein resides in the chloroplast. Functionally, this protein binds directly to 23S ribosomal RNA. This Arabidopsis thaliana (Mouse-ear cress) protein is Large ribosomal subunit protein bL34c (RPL34).